The following is a 469-amino-acid chain: MSEEVPQQFPSSKRQLHPSLSSMKPPLVAPGEYHRFDAAETRGGGAVADQVVSDAIVIKSTLKRKTDLVNQIVEVNELNTGVLQTPVSGKGGKAKKTSRSAKSNKSGTLASGSNAGSPGNNFAQAGTCRYDSSLGLLTKKFINLIKQAEDGILDLNKAADTLEVQKRRIYDITNVLEGIGLIEKTLKNRIQWKGLDVSKPGETIESIANLQDEVQNLAAEEARLDDQIRESQERLTSLSEDENNKRLLFVTENDIKNLPCFQNKTLIAVKAPHGTTLEVPDPDEAGGYQRRYRIILRSTMGPIDVYLVSQFEESFEDIPQADEPSNVPDEPSNVPDVPSNLPSTSGLPENHDVSMPMKEESTERNMETQEVDDTQRVYSDIESHDFVDGIMKIVPPDLDMGVDYWFRSEVGEVSITDMWPDESGPDWNQMITFDQDHAGPSDNKILEQPQTPSSPTPEESTATRSPTGS.

Disordered stretches follow at residues 1 to 28 (MSEE…PPLV) and 84 to 118 (QTPV…AGSP). Composition is skewed to polar residues over residues 8-22 (QFPS…SLSS) and 100-118 (SAKS…AGSP). The DNA-binding element occupies 129–194 (RYDSSLGLLT…TLKNRIQWKG (66 aa)). Positions 202–246 (ETIESIANLQDEVQNLAAEEARLDDQIRESQERLTSLSEDENNKR) form a coiled coil. The segment at 210–238 (LQDEVQNLAAEEARLDDQIRESQERLTSL) is leucine-zipper. Positions 319–374 (PQADEPSNVPDEPSNVPDVPSNLPSTSGLPENHDVSMPMKEESTERNMETQEVDDT) are disordered. Residues 349 to 374 (ENHDVSMPMKEESTERNMETQEVDDT) are compositionally biased toward basic and acidic residues. Positions 403-419 (DYWFRSEVGEVSITDMW) are retinoblastoma protein binding. Positions 426–469 (DWNQMITFDQDHAGPSDNKILEQPQTPSSPTPEESTATRSPTGS) are disordered. Residues 447–469 (EQPQTPSSPTPEESTATRSPTGS) show a composition bias toward low complexity.

This sequence belongs to the E2F/DP family. In terms of assembly, heterodimer with DP proteins. Interacts (via dimerization domain) preferentially with DPA, but also with DPB. Interacts with PURA1 and retinoblastoma-related protein RBR1. Component of a DREAM-like complex which modulates a variety of developmentally regulated genes and of the mitotic genes in proliferating and differentiated cells. Interacts with MYB3R4 only at early stages of leaves development. Phosphorylated. As to expression, expressed in proliferating cells and several differentiated tissues. Detected in inflorescence and shoot apical meristems, cotyledonary vascular tissues, leaf primordia, young leaves, base of trichomes, central cylinder and elongation zone of roots, lateral root primordia, flowers, pistils of immature flowers and pollen grains.

Its subcellular location is the cytoplasm. It is found in the nucleus. Functionally, transcription activator that binds DNA cooperatively with DP proteins through the E2 recognition site, 5'-TTTC[CG]CGC-3' found in the promoter region of a number of genes whose products are involved in cell cycle regulation or in DNA replication. The binding of retinoblastoma-related proteins represses transactivation. Involved in the control of cell-cycle progression from G1 to S phase and from G2 to M phase. Stimulates cell proliferation and delays differentiation. Represses cell enlargement and endoreduplication in auxin-free conditions. The protein is Transcription factor E2FB (E2FB) of Arabidopsis thaliana (Mouse-ear cress).